The chain runs to 160 residues: S-ribosylhomocysteine lyase (160 aa).

His57, His61, and Cys127 together coordinate Fe cation.

Belongs to the LuxS family. As to quaternary structure, homodimer. Fe cation is required as a cofactor.

The catalysed reaction is S-(5-deoxy-D-ribos-5-yl)-L-homocysteine = (S)-4,5-dihydroxypentane-2,3-dione + L-homocysteine. In terms of biological role, involved in the synthesis of autoinducer 2 (AI-2) which is secreted by bacteria and is used to communicate both the cell density and the metabolic potential of the environment. The regulation of gene expression in response to changes in cell density is called quorum sensing. Catalyzes the transformation of S-ribosylhomocysteine (RHC) to homocysteine (HC) and 4,5-dihydroxy-2,3-pentadione (DPD). The polypeptide is S-ribosylhomocysteine lyase (Streptococcus uberis (strain ATCC BAA-854 / 0140J)).